The sequence spans 526 residues: Reticulocyte-binding protein homolog 5 (526 aa).

The N-terminal stretch at Met1–Ser24 is a signal peptide. Residues Lys33 to Lys51 are mediates interaction with human BSG. 2 N-linked (GlcNAc...) asparagine glycosylation sites follow: Asn38 and Asn214. 2 disulfides stabilise this stretch: Cys224-Cys317 and Cys345-Cys351. Over residues Glu259 to Gln279 the composition is skewed to acidic residues. Positions Glu259–Asp294 are disordered. Asn297 carries N-linked (GlcNAc...) asparagine glycosylation.

In terms of assembly, forms a complex composed of RH5, P113 and human BSG/basigin; the complex bridges the merozoite and host erythrocyte membranes. Within the complex, interacts (via C-terminus) with human BSG/basigin isoform 2 (via the extracellular domain); the interaction is independent of BSG glycosylation status. Weakly interacts with P.troglodytes BSG but not with G.gorilla BSG. Also, interacts (via N-terminus) with P113; the interaction tethers RH5 to the merozoite membrane. Component of the PfRH5 adhesion complex composed of 1 copy of CyRPA, RH5 and RIPR; the complex is formed during merozoite invasion of host erythrocytes specifically at the interface between the parasite and host membranes. Within the complex, interacts with CyRPA. CyRPA recruits RIPR to the RH5-P113-BSG complex; the formation of the PfRH5 adhesion complex increases the affinity of RH5 for BSG and probably leads to the release of RH5 from P113 while maintaining the interaction of the PfRH5 adhesion complex with BSG. Post-translationally, cleaved into a 45kDa form during merozoite invasion of host erythrocyte.

It is found in the secreted. It localises to the cytoplasmic vesicle. Its subcellular location is the secretory vesicle. The protein localises to the rhoptry lumen. The protein resides in the host cell membrane. Its function is as follows. Essential for the invasion of host erythrocytes by blood stage merozoites. By binding P113 at the surface of the merozoite and human BSG/basigin on the erythrocyte membrane, leads to the establishment of a tight junction between the merozoite and host erythrocyte membranes. In addition, the interaction with BSG results in BSG dimerization which triggers an increase in intracellular Ca(2+) in the erythrocyte. This essential step leads to a rearrangement of the erythrocyte cytoskeleton required for the merozoite invasion. This Plasmodium falciparum (isolate 3D7) protein is Reticulocyte-binding protein homolog 5.